A 138-amino-acid polypeptide reads, in one-letter code: MLQSNRLAIYAIGKIKKLWIRDGINQYKKRMPELIINELKTFNLNNLRSNNNIIICLSEEGKQFNSVELCSLLLNFKNKKINFLIGDTDGVSSDIKEKSDLVLSLSPLTFPHELARLILIEQIYRAISISNNSPYHRS.

S-adenosyl-L-methionine-binding positions include Leu57, Gly86, and 105-110 (LSPLTF).

It belongs to the RNA methyltransferase RlmH family. As to quaternary structure, homodimer.

It is found in the cytoplasm. It carries out the reaction pseudouridine(1915) in 23S rRNA + S-adenosyl-L-methionine = N(3)-methylpseudouridine(1915) in 23S rRNA + S-adenosyl-L-homocysteine + H(+). Specifically methylates the pseudouridine at position 1915 (m3Psi1915) in 23S rRNA. The sequence is that of Ribosomal RNA large subunit methyltransferase H from Prochlorococcus marinus (strain MIT 9301).